A 312-amino-acid chain; its full sequence is UDP-N-acetylenolpyruvoylglucosamine reductase (312 aa).

Residues 30-202 (RVGGPAQWLA…VAAQFQLEPG (173 aa)) enclose the FAD-binding PCMH-type domain. Residue Arg181 is part of the active site. Ser232 serves as the catalytic Proton donor. The active site involves Glu302.

This sequence belongs to the MurB family. FAD is required as a cofactor.

It is found in the cytoplasm. It carries out the reaction UDP-N-acetyl-alpha-D-muramate + NADP(+) = UDP-N-acetyl-3-O-(1-carboxyvinyl)-alpha-D-glucosamine + NADPH + H(+). The protein operates within cell wall biogenesis; peptidoglycan biosynthesis. Functionally, cell wall formation. This chain is UDP-N-acetylenolpyruvoylglucosamine reductase, found in Synechococcus sp. (strain CC9311).